Reading from the N-terminus, the 250-residue chain is Ubiquinone/menaquinone biosynthesis C-methyltransferase UbiE (250 aa).

S-adenosyl-L-methionine contacts are provided by residues T74, D94, 122-123 (DA), and S139.

This sequence belongs to the class I-like SAM-binding methyltransferase superfamily. MenG/UbiE family.

It carries out the reaction a 2-demethylmenaquinol + S-adenosyl-L-methionine = a menaquinol + S-adenosyl-L-homocysteine + H(+). The enzyme catalyses a 2-methoxy-6-(all-trans-polyprenyl)benzene-1,4-diol + S-adenosyl-L-methionine = a 5-methoxy-2-methyl-3-(all-trans-polyprenyl)benzene-1,4-diol + S-adenosyl-L-homocysteine + H(+). The protein operates within quinol/quinone metabolism; menaquinone biosynthesis; menaquinol from 1,4-dihydroxy-2-naphthoate: step 2/2. It participates in cofactor biosynthesis; ubiquinone biosynthesis. Methyltransferase required for the conversion of demethylmenaquinol (DMKH2) to menaquinol (MKH2) and the conversion of 2-polyprenyl-6-methoxy-1,4-benzoquinol (DDMQH2) to 2-polyprenyl-3-methyl-6-methoxy-1,4-benzoquinol (DMQH2). The chain is Ubiquinone/menaquinone biosynthesis C-methyltransferase UbiE from Paracoccus denitrificans (strain Pd 1222).